A 446-amino-acid chain; its full sequence is GTPase Der (446 aa).

2 EngA-type G domains span residues 3–167 (PVLA…AFDE) and 180–353 (IRLA…ASAT). GTP-binding positions include 9 to 16 (GRPNVGKS), 56 to 60 (DTGGF), 119 to 122 (NKAE), 186 to 193 (GRPNVGKS), 233 to 237 (DTAGL), and 298 to 301 (NKWD). A KH-like domain is found at 354–438 (KKLATPVLTR…PMRIEMKSSR (85 aa)).

The protein belongs to the TRAFAC class TrmE-Era-EngA-EngB-Septin-like GTPase superfamily. EngA (Der) GTPase family. As to quaternary structure, associates with the 50S ribosomal subunit.

In terms of biological role, GTPase that plays an essential role in the late steps of ribosome biogenesis. This Methylibium petroleiphilum (strain ATCC BAA-1232 / LMG 22953 / PM1) protein is GTPase Der.